The sequence spans 205 residues: Metalloproteinase inhibitor 1 (205 aa).

An N-terminal signal peptide occupies residues 1-24 (MMAPFASLASGILLLLSLIASSKA). Residue C25 coordinates Zn(2+). Residues 25 to 28 (CSCA) are involved in metalloproteinase-binding. Intrachain disulfides connect C25–C94, C27–C123, C37–C148, C151–C197, C156–C161, and C169–C189. In terms of domain architecture, NTR spans 25 to 148 (CSCAPPHPQT…AFSKTYSAGC (124 aa)). An N-linked (GlcNAc...) asparagine glycan is attached at N54. Positions 91-92 (ES) are involved in metalloproteinase-binding. N102 carries N-linked (GlcNAc...) asparagine glycosylation. The residue at position 179 (S179) is a Phosphoserine.

It belongs to the protease inhibitor I35 (TIMP) family. As to quaternary structure, interacts with MMP1, MMP3, MMP10 and MMP13, but has only very low affinity for MMP14. Interacts with CD63; identified in a complex with CD63 and ITGB1. In terms of processing, the activity of TIMP1 is dependent on the presence of disulfide bonds. Post-translationally, N-glycosylated. As to expression, found in fetal and adult tissues. Highest levels are found in bone. Also found in lung, ovary and uterus.

The protein localises to the secreted. Functionally, metalloproteinase inhibitor that functions by forming one to one complexes with target metalloproteinases, such as collagenases, and irreversibly inactivates them by binding to their catalytic zinc cofactor. Acts on MMP1, MMP2, MMP3, MMP7, MMP8, MMP9, MMP10, MMP11, MMP12, MMP13 and MMP16. Does not act on MMP14. Also functions as a growth factor that regulates cell differentiation, migration and cell death and activates cellular signaling cascades via CD63 and ITGB1. Plays a role in integrin signaling. The protein is Metalloproteinase inhibitor 1 (Timp1) of Mus musculus (Mouse).